Here is a 420-residue protein sequence, read N- to C-terminus: Exodeoxyribonuclease 7 large subunit (420 aa).

The protein belongs to the XseA family. As to quaternary structure, heterooligomer composed of large and small subunits.

Its subcellular location is the cytoplasm. It catalyses the reaction Exonucleolytic cleavage in either 5'- to 3'- or 3'- to 5'-direction to yield nucleoside 5'-phosphates.. In terms of biological role, bidirectionally degrades single-stranded DNA into large acid-insoluble oligonucleotides, which are then degraded further into small acid-soluble oligonucleotides. The chain is Exodeoxyribonuclease 7 large subunit from Helicobacter pylori (strain P12).